Here is a 684-residue protein sequence, read N- to C-terminus: Actin-related protein 5 (684 aa).

Residues 262–469 (KEKSVIIQLP…ARQKQKQKAN (208 aa)) adopt a coiled-coil conformation. Disordered stretches follow at residues 392 to 443 (KEKK…PEHY) and 481 to 500 (VNPT…EDPE). Positions 402–443 (SMKDGRLAQKRKRDEEKEKEKEKEEERDRQEEESFLKDPEHY) are enriched in basic and acidic residues.

This sequence belongs to the actin family. ARP5 subfamily. As to quaternary structure, component of the chromatin-remodeling Ino80 complex.

It is found in the nucleus. Its function is as follows. Proposed core component of the chromatin remodeling Ino80 complex which is involved in transcriptional regulation, DNA replication and probably DNA repair. This Dictyostelium discoideum (Social amoeba) protein is Actin-related protein 5 (arpE).